The primary structure comprises 379 residues: Probable G-protein coupled receptor 27 (379 aa).

The Extracellular portion of the chain corresponds to 1-26 (MANASEPGGGGSGGGAEAAALGLRLA). Asn-3 carries an N-linked (GlcNAc...) asparagine glycan. Residues 27–47 (TLSLLLCVSLAGNVLFALLIV) traverse the membrane as a helical segment. The Cytoplasmic portion of the chain corresponds to 48–58 (RERSLHRAPYY). A helical membrane pass occupies residues 59–79 (LLLDLCLADGLRALACLPAVM). Over 80-100 (LAARRAAAAAGTPPGALGCKL) the chain is Extracellular. Cysteines 98 and 175 form a disulfide. Residues 101 to 121 (LAFLAALFCFHAAFLLLGVGV) traverse the membrane as a helical segment. Over 122–142 (TRYLAIAHHRFYAERLAGWPC) the chain is Cytoplasmic. A helical transmembrane segment spans residues 143-163 (AAMLVCAAWALALAAAFPPVL). Topologically, residues 164–185 (DGGGADDEDAPCALEQRPDGAP) are extracellular. Residues 186–206 (GALGFLLLLAAVVGATHLVYL) traverse the membrane as a helical segment. Topologically, residues 207 to 289 (RLLFFIHDRR…FKTEKRLCKM (83 aa)) are cytoplasmic. Residues 290–310 (FYAITLLFLLLWGPYVVASYL) traverse the membrane as a helical segment. At 311–324 (RVLVRPGAVPQAYL) the chain is on the extracellular side. Residues 325-345 (TASVWLTFAQAGINPVVCFLF) form a helical membrane-spanning segment. Over 346-379 (NRELRDCFRAQFPCCQSPQATQATLPCDLKGIGL) the chain is Cytoplasmic.

It belongs to the G-protein coupled receptor 1 family.

Its subcellular location is the cell membrane. In terms of biological role, orphan receptor. Possible candidate for amine-like G-protein coupled receptor. This Mus musculus (Mouse) protein is Probable G-protein coupled receptor 27 (Gpr27).